The following is a 502-amino-acid chain: Glycerol kinase (502 aa).

Threonine 13 contributes to the ADP binding site. ATP-binding residues include threonine 13, threonine 14, and serine 15. Threonine 13 lines the sn-glycerol 3-phosphate pocket. ADP is bound at residue arginine 17. 4 residues coordinate sn-glycerol 3-phosphate: arginine 83, glutamate 84, tyrosine 136, and aspartate 246. Glycerol contacts are provided by arginine 83, glutamate 84, tyrosine 136, aspartate 246, and glutamine 247. 2 residues coordinate ADP: threonine 268 and glycine 311. Positions 268, 311, 315, and 412 each coordinate ATP. ADP-binding residues include glycine 412 and asparagine 416.

The protein belongs to the FGGY kinase family.

It catalyses the reaction glycerol + ATP = sn-glycerol 3-phosphate + ADP + H(+). It participates in polyol metabolism; glycerol degradation via glycerol kinase pathway; sn-glycerol 3-phosphate from glycerol: step 1/1. Its activity is regulated as follows. Inhibited by fructose 1,6-bisphosphate (FBP). Key enzyme in the regulation of glycerol uptake and metabolism. Catalyzes the phosphorylation of glycerol to yield sn-glycerol 3-phosphate. In Francisella tularensis subsp. mediasiatica (strain FSC147), this protein is Glycerol kinase.